A 169-amino-acid chain; its full sequence is Phosphopantetheine adenylyltransferase (169 aa).

Thr-9 lines the substrate pocket. Residues Thr-9–Phe-10 and His-17 contribute to the ATP site. Positions 41, 73, and 87 each coordinate substrate. ATP contacts are provided by residues Gly-88–Arg-90, Glu-98, and Tyr-123–Thr-129.

This sequence belongs to the bacterial CoaD family. As to quaternary structure, homohexamer. Requires Mg(2+) as cofactor.

The protein localises to the cytoplasm. The catalysed reaction is (R)-4'-phosphopantetheine + ATP + H(+) = 3'-dephospho-CoA + diphosphate. It participates in cofactor biosynthesis; coenzyme A biosynthesis; CoA from (R)-pantothenate: step 4/5. Its function is as follows. Reversibly transfers an adenylyl group from ATP to 4'-phosphopantetheine, yielding dephospho-CoA (dPCoA) and pyrophosphate. This Bordetella bronchiseptica (strain ATCC BAA-588 / NCTC 13252 / RB50) (Alcaligenes bronchisepticus) protein is Phosphopantetheine adenylyltransferase.